Consider the following 130-residue polypeptide: 3-aminoacrylate deaminase RutC (130 aa).

It belongs to the RutC family.

The enzyme catalyses (Z)-3-aminoacrylate + H2O + H(+) = 3-oxopropanoate + NH4(+). Functionally, involved in pyrimidine catabolism. Catalyzes the deamination of 3-aminoacrylate to malonic semialdehyde, a reaction that can also occur spontaneously. RutC may facilitate the reaction and modulate the metabolic fitness, rather than catalyzing essential functions. In Methylorubrum extorquens (strain CM4 / NCIMB 13688) (Methylobacterium extorquens), this protein is 3-aminoacrylate deaminase RutC.